Consider the following 89-residue polypeptide: MALSASEKAQIVKDFQQGDGDTGSPEVQVALLSANINKLQDHFKANKQDHHSRRGLIRMVNQRRKLLDYLKRKNADRYLELIQRLGLRR.

The protein belongs to the universal ribosomal protein uS15 family. As to quaternary structure, part of the 30S ribosomal subunit. Forms a bridge to the 50S subunit in the 70S ribosome, contacting the 23S rRNA.

One of the primary rRNA binding proteins, it binds directly to 16S rRNA where it helps nucleate assembly of the platform of the 30S subunit by binding and bridging several RNA helices of the 16S rRNA. Functionally, forms an intersubunit bridge (bridge B4) with the 23S rRNA of the 50S subunit in the ribosome. The polypeptide is Small ribosomal subunit protein uS15 (Marinobacter nauticus (strain ATCC 700491 / DSM 11845 / VT8) (Marinobacter aquaeolei)).